A 360-amino-acid chain; its full sequence is tRNA N6-adenosine threonylcarbamoyltransferase (360 aa).

Residues His-115 and His-119 each coordinate Fe cation. Residues 137–141, Asp-170, Gly-183, and Asn-283 contribute to the substrate site; that span reads LVSGG. Asp-311 provides a ligand contact to Fe cation.

This sequence belongs to the KAE1 / TsaD family. Requires Fe(2+) as cofactor.

The protein resides in the cytoplasm. It carries out the reaction L-threonylcarbamoyladenylate + adenosine(37) in tRNA = N(6)-L-threonylcarbamoyladenosine(37) in tRNA + AMP + H(+). Its function is as follows. Required for the formation of a threonylcarbamoyl group on adenosine at position 37 (t(6)A37) in tRNAs that read codons beginning with adenine. Is involved in the transfer of the threonylcarbamoyl moiety of threonylcarbamoyl-AMP (TC-AMP) to the N6 group of A37, together with TsaE and TsaB. TsaD likely plays a direct catalytic role in this reaction. This Rhizobium meliloti (strain 1021) (Ensifer meliloti) protein is tRNA N6-adenosine threonylcarbamoyltransferase.